The sequence spans 256 residues: MQQQQHPAPGAEFVADRDAARAEVERALGGYSFRDGGALLLEDALTHSVHPRDEAGGRARHQRLEFLGDAALGLAFATIFYRDDPGLDQGDLTVLRSANVSTQKLARVAVRRRLYPLLRRYNCAPQDHEVSRFTKSVEGPYSGDPIEGPRVLADIVEAIVGAVYLDSKLDLEVLQKVAKLLCEPIITKKALLEDPESMLNELGGEHREDLEIKILAWRKVANVVDDGREQAITTSGLGNGSEDEVGKLRTIRIEEA.

Residues 22 to 168 (AEVERALGGY…IVGAVYLDSK (147 aa)) form the RNase III domain. Positions 65, 154, and 157 each coordinate Mg(2+).

It depends on Mg(2+) as a cofactor. Mn(2+) is required as a cofactor.

Its function is as follows. Cleaves double-stranded RNA (dsRNA). The protein is Ribonuclease 3-like protein 1 of Oryza sativa subsp. japonica (Rice).